The primary structure comprises 262 residues: Acyl-[acyl-carrier-protein]--UDP-N-acetylglucosamine O-acyltransferase (262 aa).

The protein belongs to the transferase hexapeptide repeat family. LpxA subfamily. Homotrimer.

It is found in the cytoplasm. It carries out the reaction a (3R)-hydroxyacyl-[ACP] + UDP-N-acetyl-alpha-D-glucosamine = a UDP-3-O-[(3R)-3-hydroxyacyl]-N-acetyl-alpha-D-glucosamine + holo-[ACP]. Its pathway is glycolipid biosynthesis; lipid IV(A) biosynthesis; lipid IV(A) from (3R)-3-hydroxytetradecanoyl-[acyl-carrier-protein] and UDP-N-acetyl-alpha-D-glucosamine: step 1/6. Functionally, involved in the biosynthesis of lipid A, a phosphorylated glycolipid that anchors the lipopolysaccharide to the outer membrane of the cell. In Paraburkholderia phytofirmans (strain DSM 17436 / LMG 22146 / PsJN) (Burkholderia phytofirmans), this protein is Acyl-[acyl-carrier-protein]--UDP-N-acetylglucosamine O-acyltransferase.